A 177-amino-acid polypeptide reads, in one-letter code: Large ribosomal subunit protein uL6 (177 aa).

The protein belongs to the universal ribosomal protein uL6 family. In terms of assembly, part of the 50S ribosomal subunit.

In terms of biological role, this protein binds to the 23S rRNA, and is important in its secondary structure. It is located near the subunit interface in the base of the L7/L12 stalk, and near the tRNA binding site of the peptidyltransferase center. In Rickettsia prowazekii (strain Madrid E), this protein is Large ribosomal subunit protein uL6.